The following is a 128-amino-acid chain: Anti-sigma-F factor antagonist RsfA (128 aa).

The STAS domain maps to 17–128; that stretch reads LKATIQHHDS…PTTESALSAT (112 aa). A disulfide bridge connects residues Cys73 and Cys109.

Belongs to the anti-sigma-factor antagonist family. In terms of assembly, monomer. Interacts with anti-sigma-F factor RsbW (UsfX).

Positive, redox-sensitive regulator of sigma-F (SigF) activity. When reduced binds to anti-sigma-F factor RsbW (UsfX) preventing its binding to SigF, thus activating transcription. The polypeptide is Anti-sigma-F factor antagonist RsfA (rsfA) (Mycobacterium tuberculosis (strain CDC 1551 / Oshkosh)).